The chain runs to 750 residues: Small G protein signaling modulator 3 (750 aa).

In terms of domain architecture, Rab-GAP TBC spans 114-305 (GIPHGMRPQL…RIWDLFFYEG (192 aa)). Phosphoserine is present on Ser406. Residues 415-439 (EDDLEALKAKNIKQTELVADLREAI) are a coiled coil. Positions 480 to 539 (SHRRRAKALLDFERHDDDELGFRKNDIITIISQKDEHCWVGELNGLRGWFPAKFVEVLDE) constitute an SH3 domain. An RUN domain is found at 555-718 (GVTDLVRGTL…FAFSLSQDWE (164 aa)).

Belongs to the small G protein signaling modulator family. In terms of assembly, interacts with GJA1. Interaction with GJA1 induces its degradation. Interacts via its RUN domain with the C-terminal region of NF2. Interacts with RAB3A, RAB4A, RAB5A, RAB8A, RAB11A, RAP1A, RAP1B, RAP2A, RAP2B and PDCD6I. No interaction with RAB27A. Widely expressed.

The protein localises to the cytoplasm. May play a cooperative role in NF2-mediated growth suppression of cells. This is Small G protein signaling modulator 3 from Mus musculus (Mouse).